We begin with the raw amino-acid sequence, 513 residues long: Maturase K (513 aa).

The protein belongs to the intron maturase 2 family. MatK subfamily.

The protein localises to the plastid. It is found in the chloroplast. Functionally, usually encoded in the trnK tRNA gene intron. Probably assists in splicing its own and other chloroplast group II introns. The sequence is that of Maturase K from Phragmites australis (Common reed).